Here is a 238-residue protein sequence, read N- to C-terminus: MDKIQILRKISQTLFFIYFVFLTSFCLCFFGIIEKFILKGSVGQLIAKLVVIVVLTLILGRVFCGWMCPLGFLFELMYKLRMKLFMKKKLPTVNEEVHNKLIYLRYVVLILSLVLTYYLSIYAFCQVCPIGFLTNLYGTVISLIILIFFLSLSFFVPMAFCRYFCPLGAFLSIFSIKPFFQLKTNNNCVKCKLCEFKCPMQIKITEKLDQKECIRCFECKSSCKKDALSFSYAFKKRS.

The next 4 membrane-spanning stretches (helical) occupy residues Thr-13–Ile-33, Gly-40–Gly-60, Val-107–Val-127, and Val-140–Phe-160. 4Fe-4S ferredoxin-type domains lie at Pro-178–Leu-208 and Ile-204–Ala-233. Residues Cys-188, Cys-191, Cys-194, Cys-198, Cys-213, Cys-216, Cys-219, and Cys-223 each coordinate [4Fe-4S] cluster.

The protein resides in the cell membrane. This is an uncharacterized protein from Methanocaldococcus jannaschii (strain ATCC 43067 / DSM 2661 / JAL-1 / JCM 10045 / NBRC 100440) (Methanococcus jannaschii).